The chain runs to 342 residues: Sideroflexin-5 (342 aa).

The segment covering 1–24 (MADTATTASAASAAASASNASSDA) has biased composition (low complexity). Positions 1-29 (MADTATTASAASAAASASNASSDAPPFQL) are disordered. Transmembrane regions (helical) follow at residues 105-125 (IFMP…VVGL), 165-185 (FIQG…GLNV), 256-276 (LTRV…MSML), and 289-309 (LLPV…PLAI).

It belongs to the sideroflexin family. In terms of tissue distribution, specifically expressed in the brain.

The protein resides in the mitochondrion inner membrane. The catalysed reaction is citrate(in) = citrate(out). Functionally, mitochondrial amino-acid transporter. Transports citrate. Does not act as a serine transporter: not able to mediate transport of serine into mitochondria. In brown adipose tissue, plays a role in the regulation of UCP1-dependent thermogenesis probably by supporting mitochondrial glycerol-3-phosphate utilization. The sequence is that of Sideroflexin-5 from Rattus norvegicus (Rat).